The following is a 578-amino-acid chain: Type I restriction enzyme MjaVIII methylase subunit (578 aa).

Residues 250 to 255 (EVYTPI), 280 to 282 (SGS), Glu-303, and 332 to 333 (DS) each bind S-adenosyl-L-methionine.

The protein belongs to the N(4)/N(6)-methyltransferase family. As to quaternary structure, the type I restriction/modification system is composed of three polypeptides R, M and S.

The enzyme catalyses a 2'-deoxyadenosine in DNA + S-adenosyl-L-methionine = an N(6)-methyl-2'-deoxyadenosine in DNA + S-adenosyl-L-homocysteine + H(+). Functionally, the subtype gamma methyltransferase (M) subunit of a type I restriction enzyme. The M and S subunits together form a methyltransferase (MTase) that methylates A-2 on the top and A-3 on the bottom strand of the sequence 5'-GAYN(5)GTAA-3'. In the presence of the R subunit the complex can also act as an endonuclease, binding to the same target sequence but cutting the DNA some distance from this site. Whether the DNA is cut or modified depends on the methylation state of the target sequence. When the target site is unmodified, the DNA is cut. When the target site is hemimethylated, the complex acts as a maintenance MTase modifying the DNA so that both strands become methylated. After locating a non-methylated recognition site, the enzyme complex serves as a molecular motor that translocates DNA in an ATP-dependent manner until a collision occurs that triggers cleavage. This chain is Type I restriction enzyme MjaVIII methylase subunit, found in Methanocaldococcus jannaschii (strain ATCC 43067 / DSM 2661 / JAL-1 / JCM 10045 / NBRC 100440) (Methanococcus jannaschii).